A 115-amino-acid chain; its full sequence is Protein Diedel (115 aa).

The N-terminal stretch at 1-24 is a signal peptide; sequence MASPVVSLLLVGICALAFVHVARS. Cystine bridges form between C26–C81, C27–C87, C42–C55, C60–C71, and C76–C83.

The protein belongs to the Diedel family. As to expression, detected in hemolymph (at protein level). Also expressed in the fat body and is probably synthesized in the fat body and secreted into the hemolymph.

The protein resides in the secreted. Its function is as follows. Cytokine which promotes survival following infection by Sindbis virus by suppressing the immune deficiency pathway. Following infection by the enteropathogenic bacteria E.carotovora limits intestinal stem cells proliferation. When secreted from muscle or adipose tissue, can attenuate age-related intestinal tissue degeneration by inhibiting apoptosis. In Drosophila melanogaster (Fruit fly), this protein is Protein Diedel.